The chain runs to 292 residues: Cholesterol ring-cleaving hydrolase IpdA subunit (292 aa).

The protein belongs to the 3-oxoacid CoA-transferase subunit A family. As to quaternary structure, heterotetramer composed of 2 IpdA subunits and 2 IpdB subunits.

The enzyme catalyses (3E)-2-(2-carboxylatoethyl)-3-methyl-6-oxocyclohex-1-ene-1-carboxyl-CoA + H2O = 6-methyl-3,7-dioxodecanedioyl-CoA. Its pathway is steroid metabolism; cholesterol degradation. Its function is as follows. Involved in the final steps of cholesterol and steroid degradation. Opens the last steroid ring of cholesterol by catalyzing the hydrolysis of (3E)-2-(2-carboxylatoethyl)-3-methyl-6-oxocyclohex-1-ene-1-carboxyl-CoA (COCHEA-CoA) to 6-methyl-3,7-dioxodecanedioyl-CoA (MeDODA-CoA). The chain is Cholesterol ring-cleaving hydrolase IpdA subunit from Mycobacterium tuberculosis (strain CDC 1551 / Oshkosh).